The sequence spans 908 residues: E3 ubiquitin-protein ligase ZNF598 (908 aa).

The segment at 27 to 67 adopts an RING-type zinc-finger fold; the sequence is CVLCCGDLEATALGRCDHPVCYRCSTKMRVLCEQRYCAVCR. The C2H2-type zinc finger occupies 185–208; that stretch reads PLCKFCDERYLDNDELLKHLRRDH. Disordered stretches follow at residues 292–338, 350–441, 467–557, 569–619, and 719–744; these read SRRS…KREE, SVAA…EEDF, PGPP…TVQG, SLLA…LEAP, and PSSHSACAPSPTTTTTTTTTTKTPGL. Serine 295 is subject to Phosphoserine. Phosphotyrosine is present on tyrosine 304. Residues 313–329 are compositionally biased toward low complexity; it reads QGRAGRASGRGAQQNRR. Positions 358–385 are enriched in basic and acidic residues; sequence ETQRVEDREEGSRPKKEEAAARVPEEPR. Residue serine 433 is modified to Phosphoserine. The segment covering 482-501 has biased composition (low complexity); the sequence is PALVSSAPKPSSAPSSLISA. Basic residues predominate over residues 529-538; sequence KAGKGSRGGR.

It belongs to the ZNF598/HEL2 family. In terms of assembly, interacts with the E2 ubiquitin-conjugating enzyme UBE2D3. Component of the 4EHP-GYF2 complex, at least composed of EIF4E2, GIGYF2 and ZNF598.

The protein resides in the cytoplasm. It localises to the cytosol. It carries out the reaction S-ubiquitinyl-[E2 ubiquitin-conjugating enzyme]-L-cysteine + [acceptor protein]-L-lysine = [E2 ubiquitin-conjugating enzyme]-L-cysteine + N(6)-ubiquitinyl-[acceptor protein]-L-lysine.. Its pathway is protein modification; protein ubiquitination. In terms of biological role, E3 ubiquitin-protein ligase that plays a key role in the ribosome quality control (RQC), a pathway that takes place when a ribosome has stalled during translation, leading to degradation of nascent peptide chains. ZNF598 is activated when ribosomes are stalled within an mRNA following translation of prematurely polyadenylated mRNAs. Acts as a ribosome collision sensor: specifically recognizes and binds collided di-ribosome, which arises when a trailing ribosome encounters a slower leading ribosome, leading to terminally arrest translation. Following binding to colliding ribosomes, mediates monoubiquitination of 40S ribosomal proteins RPS10/eS10 and RPS3/uS3, and 'Lys-63'-linked polyubiquitination of RPS20/uS10. Polyubiquitination of RPS20/uS10 promotes recruitment of the RQT (ribosome quality control trigger) complex, which drives the disassembly of stalled ribosomes, followed by degradation of nascent peptides. E3 ubiquitin-protein ligase activity is dependent on the E2 ubiquitin-conjugating enzyme UBE2D3. Also acts as an adapter that recruits the 4EHP-GYF2 complex to mRNAs. Independently of its role in RQC, may also act as a negative regulator of interferon-stimulated gene (ISG) expression. The sequence is that of E3 ubiquitin-protein ligase ZNF598 from Mus musculus (Mouse).